We begin with the raw amino-acid sequence, 374 residues long: tRNA-specific 2-thiouridylase MnmA (374 aa).

ATP is bound by residues 8–15 (GLSGGVDS) and Met-34. An interaction with target base in tRNA region spans residues 104-106 (NPD). Catalysis depends on Cys-109, which acts as the Nucleophile. A disulfide bridge connects residues Cys-109 and Cys-208. Gly-134 is a binding site for ATP. Residues 158–160 (KDQ) form an interaction with tRNA region. Cys-208 serves as the catalytic Cysteine persulfide intermediate. The interval 321 to 322 (RY) is interaction with tRNA.

This sequence belongs to the MnmA/TRMU family.

Its subcellular location is the cytoplasm. It carries out the reaction S-sulfanyl-L-cysteinyl-[protein] + uridine(34) in tRNA + AH2 + ATP = 2-thiouridine(34) in tRNA + L-cysteinyl-[protein] + A + AMP + diphosphate + H(+). Functionally, catalyzes the 2-thiolation of uridine at the wobble position (U34) of tRNA, leading to the formation of s(2)U34. This Mesoplasma florum (strain ATCC 33453 / NBRC 100688 / NCTC 11704 / L1) (Acholeplasma florum) protein is tRNA-specific 2-thiouridylase MnmA.